The following is a 148-amino-acid chain: SsrA-binding protein (148 aa).

It belongs to the SmpB family.

The protein localises to the cytoplasm. Required for rescue of stalled ribosomes mediated by trans-translation. Binds to transfer-messenger RNA (tmRNA), required for stable association of tmRNA with ribosomes. tmRNA and SmpB together mimic tRNA shape, replacing the anticodon stem-loop with SmpB. tmRNA is encoded by the ssrA gene; the 2 termini fold to resemble tRNA(Ala) and it encodes a 'tag peptide', a short internal open reading frame. During trans-translation Ala-aminoacylated tmRNA acts like a tRNA, entering the A-site of stalled ribosomes, displacing the stalled mRNA. The ribosome then switches to translate the ORF on the tmRNA; the nascent peptide is terminated with the 'tag peptide' encoded by the tmRNA and targeted for degradation. The ribosome is freed to recommence translation, which seems to be the essential function of trans-translation. The chain is SsrA-binding protein from Mycoplasma mycoides subsp. mycoides SC (strain CCUG 32753 / NCTC 10114 / PG1).